A 192-amino-acid polypeptide reads, in one-letter code: Protein CREG1 (192 aa).

The first 18 residues, methionine 1–glycine 18, serve as a signal peptide directing secretion. 3 N-linked (GlcNAc...) asparagine glycosylation sites follow: asparagine 95, asparagine 133, and asparagine 166.

It belongs to the CREG family.

It localises to the secreted. May contribute to the transcriptional control of cell growth and differentiation. In Gallus gallus (Chicken), this protein is Protein CREG1 (CREG1).